Consider the following 336-residue polypeptide: MLQSLAGSSCVRLVERHRSAWCFGFLVLGYLLYLVFGAVVFSSVELPYEDLLRQELRKLKRRFLEEHECLSEPQLEQFLGRVLEASNYGVSVLSNASGNWNWDFTSALFFASTVLSTTGYGHTVPLSDGGKAFCIIYSVIGIPFTLLFLTAVVQRVTIHVTRRPVLYFHVRWGFSKQAVAIVHAVLLGVVTVSCFFFIPAAVFSVLEDDWNFLESFYFCFISLSTIGLGDYVPGEGYNQKFRELYKIGITCYLLLGLIAMLVVLETFCELHELKKFRKMFYVKKDKEEDQMHIIEHDQLSFSSITDQAAGVQEDQKQNEPFVSPQPPALADGASDH.

The Cytoplasmic segment spans residues 1–20 (MLQSLAGSSCVRLVERHRSA). A helical transmembrane segment spans residues 21-41 (WCFGFLVLGYLLYLVFGAVVF). Over 42 to 103 (SSVELPYEDL…SNASGNWNWD (62 aa)) the chain is Extracellular. Asparagine 95 carries an N-linked (GlcNAc...) asparagine glycan. Residues 104 to 116 (FTSALFFASTVLS) constitute an intramembrane region (helical). The stretch at 117-122 (TTGYGH) is an intramembrane region. The tract at residues 117-122 (TTGYGH) is selectivity filter 1. Over 123–132 (TVPLSDGGKA) the chain is Extracellular. The chain crosses the membrane as a helical span at residues 133 to 156 (FCIIYSVIGIPFTLLFLTAVVQRV). Residues 157–181 (TIHVTRRPVLYFHVRWGFSKQAVAI) lie on the Cytoplasmic side of the membrane. Residues 182-202 (VHAVLLGVVTVSCFFFIPAAV) form a helical membrane-spanning segment. The Extracellular portion of the chain corresponds to 203-211 (FSVLEDDWN). The segment at residues 212–224 (FLESFYFCFISLS) is an intramembrane region (helical). The selectivity filter 2 stretch occupies residues 225 to 230 (TIGLGD). The stretch at 225-231 (TIGLGDY) is an intramembrane region. The Extracellular portion of the chain corresponds to 232 to 243 (VPGEGYNQKFRE). A helical membrane pass occupies residues 244 to 267 (LYKIGITCYLLLGLIAMLVVLETF). Over 268–336 (CELHELKKFR…PALADGASDH (69 aa)) the chain is Cytoplasmic. Lysine 274 is covalently cross-linked (Glycyl lysine isopeptide (Lys-Gly) (interchain with G-Cter in SUMO)). The tract at residues 293-299 (IIEHDQL) is important for intracellular retention in recycling endosomes. A disordered region spans residues 307 to 336 (QAAGVQEDQKQNEPFVSPQPPALADGASDH).

This sequence belongs to the two pore domain potassium channel (TC 1.A.1.8) family. Homodimer; disulfide-linked. Heterodimer with KCNK2; disulfide-linked. In astrocytes, forms mostly heterodimeric potassium channels with KCNK2, with only a minor proportion of functional channels containing homodimeric KCNK1. Interacts with KCNK3 and KCNK9, forming functional heterodimeric channels. Interacts with GNG4. Identified in a complex with PSD and ARF6; interacts only with PSD that is bound to ARF6. Interacts with UBE2I. Sumoylation is controversial. Sumoylated by UBE2I. Not sumoylated when expressed in xenopus oocytes or mammalian cells. Sumoylation inactivates the channel, but does not interfere with expression at the cell membrane. Sumoylation of a single subunit is sufficient to silence the dimeric channel. Sumoylation of KCNK1 is sufficient to silence heterodimeric channels formed by KCNK1 and KCNK3 or KCNK9. Desumoylated by SENP1; this activates the channel. Desumoylated by SENP1; this strongly increases halothane-mediated activation of heterodimeric channels formed with KCNK9. SENP1 treatment has no effect.

Its subcellular location is the cell membrane. The protein resides in the recycling endosome. It localises to the synaptic cell membrane. It is found in the cytoplasmic vesicle. The protein localises to the perikaryon. Its subcellular location is the cell projection. The protein resides in the dendrite. It localises to the apical cell membrane. It catalyses the reaction K(+)(in) = K(+)(out). It carries out the reaction NH4(+)(in) = NH4(+)(out). The catalysed reaction is Na(+)(in) = Na(+)(out). The enzyme catalyses Rb(+)(in) = Rb(+)(out). It catalyses the reaction Cs(+)(in) = Cs(+)(out). It carries out the reaction Li(+)(in) = Li(+)(out). The catalysed reaction is L-glutamate(out) = L-glutamate(in). The enzyme catalyses chloride(in) = chloride(out). Ion channel that contributes to passive transmembrane potassium transport and to the regulation of the resting membrane potential in brain astrocytes, but also in kidney and in other tissues. Forms dimeric channels through which potassium ions pass in accordance with their electrochemical gradient. The channel is selective for K(+) ions at physiological potassium concentrations and at neutral pH, but becomes permeable to Na(+) at subphysiological K(+) levels and upon acidification of the extracellular medium. The homodimer has very low potassium channel activity, when expressed in heterologous systems, and can function as weakly inward rectifying potassium channel. Channel activity is modulated by activation of serotonin receptors. Heterodimeric channels containing KCNK1 and KCNK2 have much higher activity, and may represent the predominant form in astrocytes. Heterodimeric channels containing KCNK1 and KCNK3 or KCNK9 have much higher activity. Heterodimeric channels formed by KCNK1 and KCNK9 may contribute to halothane-sensitive currents. Mediates outward rectifying potassium currents in dentate gyrus granule cells and contributes to the regulation of their resting membrane potential. Contributes to the regulation of action potential firing in dentate gyrus granule cells and down-regulates their intrinsic excitability. In astrocytes, the heterodimer formed by KCNK1 and KCNK2 is required for rapid glutamate release in response to activation of G-protein coupled receptors, such as F2R and CNR1. Required for normal ion and water transport in the kidney. Contributes to the regulation of the resting membrane potential of pancreatic beta cells. The low channel activity of homodimeric KCNK1 may be due to sumoylation. The low channel activity may be due to rapid internalization from the cell membrane and retention in recycling endosomes. Permeable to monovalent cations with ion selectivity for K(+) &gt; Rb(+) &gt;&gt; NH4(+) &gt;&gt; Cs(+) = Na(+) = Li(+). The sequence is that of Potassium channel subfamily K member 1 from Bos taurus (Bovine).